We begin with the raw amino-acid sequence, 355 residues long: MADKSHVNNVPMQGNGAYSSHAALQHEAMLKALPLFQAAAEVIANVDSTRISIVEYGSAHGNNSLEPMEAILKSIPTESLELLFSDRPENDFCTLSKTVTAWADGIVGNQLLNPLFISMIPRSFYQQVVPPKSAHLGFSLAALHHLDHVPQPTEDGQDESELLQQQAHVDLATFLKLRSQEIVSGGSLILSFVSQASAGYENYSGPVDACRNAMIEMVQQGKIPLSVAQAFRVPTYNRTLSDVKKVMDEFTQTWKVHDLFEDDVMHPAFHKLKIQSNPSLEASHKYAEVVIDWMMAVCSGYFTKALQVGSQGGYTKQEEEGLLQVWVTRTKEFFIRDYKDKEVICSFIYIRLERL.

5 residues coordinate S-adenosyl-L-homocysteine: Tyr18, Asn63, Asp86, Ser123, and Phe124. Phe231 contributes to the Mg(2+) binding site.

The protein belongs to the methyltransferase superfamily. Type-7 methyltransferase family. Mg(2+) is required as a cofactor.

Its pathway is mycotoxin biosynthesis. Its function is as follows. Methyltransferase; part of the gene cluster that mediates the biosynthesis of the mycotoxin fusarin C. Within the cluster, FUS1, FUS2, FUS8 and FUS9 are sufficient for fusarin production. The roles of the other FUS members are yet undetermined. The fusarin C synthetase FUS1 is responsible for the condensation of one acetyl-coenzyme A (CoA) unit with six malonyl-CoA units and the amide linkage of the arising heptaketide and homoserine, subsequently releasing the first intermediate, prefusarin, as an alcohol with an open ring structure. The cytochrome P450 monooxygenase FUS8 participates in multiple oxidation processes at carbon C-20 and is able to use the FUS1 product as substrate, resulting in formation of 20-hydroxy-prefusarin. This reaction seems to be essential before the 2-pyrrolidone ring closure can be catalyzed by FUS2, generating 20-hydroxy-fusarin. FUS8 is able to further oxidizes carbon C-20 after ring closure, resulting in the formation of carboxy-fusarin C. As the last step, FUS9 methylates the hydroxyl group at C-21 to generate fusarin C. Fusarin C can then rearrange to epi-fusarin C, the (z)-isomers, and fusarin A and fusarin D. The chain is Methyltransferase FUS9 from Gibberella fujikuroi (strain CBS 195.34 / IMI 58289 / NRRL A-6831) (Bakanae and foot rot disease fungus).